Consider the following 248-residue polypeptide: Acetylglutamate kinase (248 aa).

Residues 41-42 (GG), Arg63, and Asn155 each bind substrate.

The protein belongs to the acetylglutamate kinase family. ArgB subfamily.

It is found in the cytoplasm. The enzyme catalyses N-acetyl-L-glutamate + ATP = N-acetyl-L-glutamyl 5-phosphate + ADP. It participates in amino-acid biosynthesis; L-arginine biosynthesis; N(2)-acetyl-L-ornithine from L-glutamate: step 2/4. Functionally, catalyzes the ATP-dependent phosphorylation of N-acetyl-L-glutamate. This Lactiplantibacillus plantarum (strain ATCC BAA-793 / NCIMB 8826 / WCFS1) (Lactobacillus plantarum) protein is Acetylglutamate kinase.